The following is a 321-amino-acid chain: Probable GDP-L-fucose synthase (321 aa).

Residue 8 to 14 (GGTGLVG) participates in NADP(+) binding. The Proton donor/acceptor role is filled by Y136. NADP(+) contacts are provided by residues K140, 163–166 (PCNI), and H179. The substrate site is built by R187, R215, and D277.

Belongs to the NAD(P)-dependent epimerase/dehydratase family. Fucose synthase subfamily. In terms of assembly, homodimer.

It catalyses the reaction GDP-beta-L-fucose + NADP(+) = GDP-4-dehydro-alpha-D-rhamnose + NADPH + H(+). It participates in nucleotide-sugar biosynthesis; GDP-L-fucose biosynthesis via de novo pathway; GDP-L-fucose from GDP-alpha-D-mannose: step 2/2. Catalyzes the two-step NADP-dependent conversion of GDP-4-dehydro-6-deoxy-D-mannose to GDP-fucose, involving an epimerase and a reductase reaction. The polypeptide is Probable GDP-L-fucose synthase (Gmer) (Drosophila melanogaster (Fruit fly)).